We begin with the raw amino-acid sequence, 406 residues long: MAVAGGRGCVRSLREGVLWRSSPCHCDYTATRHFLGALQKLPLQAWVRKVHTAPLRTLFLLRPVPILLAAGGGYAGYRQYEKYRERQLEKLGLEIPPKLASHWEVSLYKSVPTRLLSRACGRLNQVELPSWLRRPVYSLYIWTFGVNMTEAAVEDLQHYRNLSEFFRRKLKPQARPVCGLHSVISPSDGKILTFGQVKNSEVEQVKGVTYSLESFLGPRACTEDLPFPPASSCDSFRNQLVTREGNELYHCVIYLAPGDYHCFHSPTDWTVSHRRHFPGSLMSVNPGMARWIKELFCHNERVVLTGDWKHGFFSLTAVGATNVGSIRIHFDQDLHTNSPSYSKGSYNDLSFVTHANKEGIPMRKGEPLGEFNLGSTIVLIFEAPKDFNFRLKAGQKILFGEALGSL.

The N-terminal 49 residues, 1 to 49 (MAVAGGRGCVRSLREGVLWRSSPCHCDYTATRHFLGALQKLPLQAWVRK), are a transit peptide targeting the mitochondrion. Residues 50-60 (VHTAPLRTLFL) are Mitochondrial matrix-facing. A helical transmembrane segment spans residues 61-79 (LRPVPILLAAGGGYAGYRQ). Over 80 to 406 (YEKYRERQLE…ILFGEALGSL (327 aa)) the chain is Mitochondrial intermembrane. Catalysis depends on charge relay system; for autoendoproteolytic cleavage activity residues D188, H264, and S375. The Schiff-base intermediate with substrate; via pyruvic acid; for decarboxylase activity role is filled by S375. S375 is modified (pyruvic acid (Ser); by autocatalysis).

This sequence belongs to the phosphatidylserine decarboxylase family. PSD-B subfamily. Eukaryotic type I sub-subfamily. Heterodimer of a large membrane-associated beta subunit and a small pyruvoyl-containing alpha subunit. The cofactor is pyruvate. Post-translationally, is synthesized initially as an inactive proenzyme. Formation of the active enzyme involves a self-maturation process in which the active site pyruvoyl group is generated from an internal serine residue via an autocatalytic post-translational modification. Two non-identical subunits are generated from the proenzyme in this reaction, and the pyruvate is formed at the N-terminus of the alpha chain, which is derived from the carboxyl end of the proenzyme. The autoendoproteolytic cleavage occurs by a canonical serine protease mechanism, in which the side chain hydroxyl group of the serine supplies its oxygen atom to form the C-terminus of the beta chain, while the remainder of the serine residue undergoes an oxidative deamination to produce ammonia and the pyruvoyl prosthetic group on the alpha chain. During this reaction, the Ser that is part of the protease active site of the proenzyme becomes the pyruvoyl prosthetic group, which constitutes an essential element of the active site of the mature decarboxylase.

It localises to the mitochondrion inner membrane. Its subcellular location is the cytoplasm. It is found in the lipid droplet. The catalysed reaction is a 1,2-diacyl-sn-glycero-3-phospho-L-serine + H(+) = a 1,2-diacyl-sn-glycero-3-phosphoethanolamine + CO2. Its pathway is phospholipid metabolism; phosphatidylethanolamine biosynthesis. Its activity is regulated as follows. Inhibited by hydroxylamine. Functionally, catalyzes the formation of phosphatidylethanolamine (PtdEtn) from phosphatidylserine (PtdSer). Plays a central role in phospholipid metabolism and in the interorganelle trafficking of phosphatidylserine. May be involved in lipid droplet biogenesis at the endoplasmic reticulum membrane. In Rattus norvegicus (Rat), this protein is Phosphatidylserine decarboxylase proenzyme, mitochondrial.